A 92-amino-acid chain; its full sequence is Large ribosomal subunit protein eL43A (92 aa).

The C4-type zinc finger occupies 39-60 (CSFCGKKTVKRGAAGIWTCSCC). Serine 40 is modified (phosphoserine).

Belongs to the eukaryotic ribosomal protein eL43 family. As to quaternary structure, component of the large ribosomal subunit (LSU). Mature yeast ribosomes consist of a small (40S) and a large (60S) subunit. The 40S small subunit contains 1 molecule of ribosomal RNA (18S rRNA) and 33 different proteins (encoded by 57 genes). The large 60S subunit contains 3 rRNA molecules (25S, 5.8S and 5S rRNA) and 46 different proteins (encoded by 81 genes).

The protein localises to the cytoplasm. Its function is as follows. Component of the ribosome, a large ribonucleoprotein complex responsible for the synthesis of proteins in the cell. The small ribosomal subunit (SSU) binds messenger RNAs (mRNAs) and translates the encoded message by selecting cognate aminoacyl-transfer RNA (tRNA) molecules. The large subunit (LSU) contains the ribosomal catalytic site termed the peptidyl transferase center (PTC), which catalyzes the formation of peptide bonds, thereby polymerizing the amino acids delivered by tRNAs into a polypeptide chain. The nascent polypeptides leave the ribosome through a tunnel in the LSU and interact with protein factors that function in enzymatic processing, targeting, and the membrane insertion of nascent chains at the exit of the ribosomal tunnel. This chain is Large ribosomal subunit protein eL43A, found in Saccharomyces cerevisiae (strain ATCC 204508 / S288c) (Baker's yeast).